A 79-amino-acid polypeptide reads, in one-letter code: uncharacterized protein (79 aa).

Residues 1–19 form the signal peptide; that stretch reads MKYVALAFVLSLVILQISA.

In terms of tissue distribution, nacreous layer of shell (at protein level). Expressed primarily in the mantle with highest level in the mantle pallium and lower level in the mantle edge.

It is found in the secreted. This is an uncharacterized protein from Pinctada maxima (Silver-lipped pearl oyster).